The following is a 139-amino-acid chain: Arsenate reductase (139 aa).

Active-site nucleophile residues include cysteine 10, cysteine 82, and cysteine 89. 2 disulfide bridges follow: cysteine 10–cysteine 82 and cysteine 82–cysteine 89.

Belongs to the low molecular weight phosphotyrosine protein phosphatase family. Thioredoxin-coupled ArsC subfamily.

The protein resides in the cytoplasm. The catalysed reaction is arsenate + [thioredoxin]-dithiol + H(+) = arsenite + [thioredoxin]-disulfide + H2O. Catalyzes the reduction of arsenate [As(V)] to arsenite [As(III)]. This Halalkalibacterium halodurans (strain ATCC BAA-125 / DSM 18197 / FERM 7344 / JCM 9153 / C-125) (Bacillus halodurans) protein is Arsenate reductase.